Reading from the N-terminus, the 473-residue chain is MSKGQVIQVMGPVVDVKFEGGNLPEIYNALVIEYKSDAEEAPTSQLTLEVAIQLGDDVVRTIAMASTDGVQRGMEVIDTGSPITVPVGTVTLGRVFNVLGNTIDLDEPLPSDIKRNKIHREAPTFDQLATTTEILETGIKVVDLLAPYLKGGKIGLFGGAGVGKTVLIQELIHNIAQEHGGISVFAGVGERTREGNDLYFEMKDSGVIEKTAMVFGQMNEPPGARMRVALTGLTIAEYFRDEEHQDVLLFIDNIFRFTQAGSEVSALLGRMPSAVGYQPTLATEMGQLQERITSTNVGSVTSIQAIYVPADDYTDPAPATTFAHLDATTNLERKLTEQGIYPAVDPLASTSRALSPDIVGEEHYAVATEVQRLLQRYKELQDIIAILGMDELSDEDKQSVSRARRVQFFLSQNFHVAEQFTGQKGSYVPVKETVKGFKDLLAGKYDHIPEDAFRSVGRIEDVLEKAKDMGVEV.

ATP is bound at residue 158–165 (GGAGVGKT).

This sequence belongs to the ATPase alpha/beta chains family. As to quaternary structure, F-type ATPases have 2 components, CF(1) - the catalytic core - and CF(0) - the membrane proton channel. CF(1) has five subunits: alpha(3), beta(3), gamma(1), delta(1), epsilon(1). CF(0) has three main subunits: a(1), b(2) and c(9-12). The alpha and beta chains form an alternating ring which encloses part of the gamma chain. CF(1) is attached to CF(0) by a central stalk formed by the gamma and epsilon chains, while a peripheral stalk is formed by the delta and b chains.

The protein localises to the cell membrane. It catalyses the reaction ATP + H2O + 4 H(+)(in) = ADP + phosphate + 5 H(+)(out). Produces ATP from ADP in the presence of a proton gradient across the membrane. The catalytic sites are hosted primarily by the beta subunits. The sequence is that of ATP synthase subunit beta 2 from Listeria monocytogenes serotype 4b (strain F2365).